Reading from the N-terminus, the 144-residue chain is Large ribosomal subunit protein uL16 (144 aa).

Belongs to the universal ribosomal protein uL16 family. As to quaternary structure, part of the 50S ribosomal subunit.

Binds 23S rRNA and is also seen to make contacts with the A and possibly P site tRNAs. The sequence is that of Large ribosomal subunit protein uL16 from Heliobacterium modesticaldum (strain ATCC 51547 / Ice1).